The chain runs to 372 residues: NADH-quinone oxidoreductase subunit D (372 aa).

It belongs to the complex I 49 kDa subunit family. As to quaternary structure, NDH-1 is composed of 14 different subunits. Subunits NuoB, C, D, E, F, and G constitute the peripheral sector of the complex.

It is found in the cell inner membrane. It catalyses the reaction a quinone + NADH + 5 H(+)(in) = a quinol + NAD(+) + 4 H(+)(out). Its function is as follows. NDH-1 shuttles electrons from NADH, via FMN and iron-sulfur (Fe-S) centers, to quinones in the respiratory chain. The immediate electron acceptor for the enzyme in this species is believed to be ubiquinone. Couples the redox reaction to proton translocation (for every two electrons transferred, four hydrogen ions are translocated across the cytoplasmic membrane), and thus conserves the redox energy in a proton gradient. The polypeptide is NADH-quinone oxidoreductase subunit D (Desulfotalea psychrophila (strain LSv54 / DSM 12343)).